A 174-amino-acid polypeptide reads, in one-letter code: MELFGVPIQTMYLYTLIIAGSLTLLFLFFGDVFSGLSEGIPFLNPTLVLSFFTCFSAGGYIGELVLPLSSLLIALLSCILSIMLVVLLHIFVLVPLSSAEESLAYREDDLRGRLGKVITAVPVDGFGEVVIEGIGGTISKSAVSFDNQQISYGTTVLVVDINNGVLSVTPHEPI.

A run of 3 helical transmembrane segments spans residues 16–36 (LIIA…FSGL), 47–67 (LVLS…LVLP), and 72–92 (LIAL…HIFV).

This sequence belongs to the NfeD family.

The protein resides in the cell membrane. It is found in the membrane raft. Its function is as follows. Plays a role in assembly of FloT membrane rafts, probably recruited to rafts by FloT. This is Membrane protein NfeD2 from Bacillus subtilis (strain 168).